Reading from the N-terminus, the 270-residue chain is ATP synthase subunit a (270 aa).

5 helical membrane-spanning segments follow: residues 38 to 58 (VHID…GIFY), 98 to 118 (IAPL…MDLV), 143 to 163 (DVNI…YYSI), 208 to 228 (LFGN…MLPW), and 239 to 259 (AIFH…LTIV).

Belongs to the ATPase A chain family. F-type ATPases have 2 components, CF(1) - the catalytic core - and CF(0) - the membrane proton channel. CF(1) has five subunits: alpha(3), beta(3), gamma(1), delta(1), epsilon(1). CF(0) has three main subunits: a(1), b(2) and c(9-12). The alpha and beta chains form an alternating ring which encloses part of the gamma chain. CF(1) is attached to CF(0) by a central stalk formed by the gamma and epsilon chains, while a peripheral stalk is formed by the delta and b chains.

It is found in the cell inner membrane. Its function is as follows. Key component of the proton channel; it plays a direct role in the translocation of protons across the membrane. The protein is ATP synthase subunit a of Vibrio parahaemolyticus serotype O3:K6 (strain RIMD 2210633).